The sequence spans 1090 residues: UPF0507 protein SCRG_01893 (1090 aa).

Residues 289 to 436 enclose the VPS9 domain; the sequence is FSVNQLLTDF…FEDFNKNTGN (148 aa).

This sequence belongs to the UPF0507 family.

The polypeptide is UPF0507 protein SCRG_01893 (Saccharomyces cerevisiae (strain RM11-1a) (Baker's yeast)).